The chain runs to 318 residues: Ethyl acetate hydrolase (318 aa).

Catalysis depends on residues S165, D261, and H291.

It belongs to the 'GDXG' lipolytic enzyme family. Monomer.

The protein localises to the cytoplasm. The enzyme catalyses ethyl acetate + H2O = ethanol + acetate + H(+). Its activity is regulated as follows. Inhibited by the serine protease inhibitor phenylmethylsulfonyl fluoride, the histidine reagent diethylpyrocarbonate and two sulfhydryl reagents, mercuric chloride and naphthol AS-D chloroacetate. Not inhibited by EDTA. Esterase that catalyzes the hydrolysis of ethyl acetate. Can also use propyl acetate and the chromogenic substrates alpha-naphthyl acetate, alpha-naphthyl propionate, alpha-naphthyl caproate and 4-nitrophenyl acetate, with a preference for short-chain aliphatic esters. Highest activity is obtained in vitro with propyl acetate, followed by ethyl acetate. In vivo, could be involved in pyoverdine biosynthesis, but its specific role and its in vivo substrate have not been identified. This is Ethyl acetate hydrolase from Pseudomonas putida (Arthrobacter siderocapsulatus).